We begin with the raw amino-acid sequence, 601 residues long: MDWGTELWDQFEVLERHTQWGLDLLDRYVKFVKERTEVEQAYAKQLRSLVKKYLPKRPAKDDPESKFSQQQSFVQILQEVNDFAGQRELVAENLSVRVCLELTKYSQEMKQERKMHFQEGRRAQQQLENGFKQLENSKRKFERDCREAEKAAQTAERLDQDINATKADVEKAKQQAHLRSHMAEESKNEYAAQLQRFNRDQAHFYFSQMPQIFDKLQDMDERRATRLGAGYGLLSEAELEVVPIIAKCLEGMKVAANAVDPKNDSQVLIELHKSGFARPGDVEFEDFSQPMNRAPSDSSLGTPSDGRPELRGPGRSRTKRWPFGKKNKPRPPPLSPLGGPVPSALPNGPPSPRSGRDPLAILSEISKSVKPRLASFRSLRGSRGTVVTEDFSHLPPEQQRKRLQQQLEERSRELQKEVDQREALKKMKDVYEKTPQMGDPASLEPQITETLSNIERLKLEVQKYEAWLAEAESRVLSNRGDSLSRHARPPDPPTSAPPDSSSNSASQDTKESSEEPPSEESQDTPIYTEFDEDFEEEPTSPIGHCVAIYHFEGSSEGTISMAEGEDLSLMEEDKGDGWTRVRRKEGGEGYVPTSYLRVTLN.

Residues 1–117 (MDWGTELWDQ…EMKQERKMHF (117 aa)) form a required for translocation to the plasma membrane in response to insulin, podosome formation and interaction with AKAP9 and microtubules region. The F-BAR domain occupies 1 to 264 (MDWGTELWDQ…AANAVDPKND (264 aa)). Residues 67 to 259 (FSQQQSFVQI…EGMKVAANAV (193 aa)) are a coiled coil. Disordered stretches follow at residues 280-358 (GDVE…GRDP), 390-420 (DFSH…EVDQ), and 478-543 (NRGD…SPIG). Over residues 289–302 (QPMNRAPSDSSLGT) the composition is skewed to polar residues. Residues 293-537 (RAPSDSSLGT…TEFDEDFEEE (245 aa)) are interaction with CDC42. The interaction with PDE6G stretch occupies residues 293–601 (RAPSDSSLGT…PTSYLRVTLN (309 aa)). A phosphoserine mark is found at serine 296, serine 298, and serine 299. Residues 314–329 (GRSRTKRWPFGKKNKP) are compositionally biased toward basic residues. Serine 335 bears the Phosphoserine mark. Low complexity predominate over residues 336–346 (PLGGPVPSALP). Serine 351 carries the phosphoserine modification. The stretch at 388–481 (TEDFSHLPPE…ESRVLSNRGD (94 aa)) forms a coiled coil. The region spanning 393–470 (HLPPEQQRKR…VQKYEAWLAE (78 aa)) is the REM-1 domain. Over residues 407-420 (LEERSRELQKEVDQ) the composition is skewed to basic and acidic residues. The required for interaction with FASLG and localization to lysosomes stretch occupies residues 471–601 (AESRVLSNRG…PTSYLRVTLN (131 aa)). Phosphoserine is present on serine 482. The tract at residues 487 to 541 (ARPPDPPTSAPPDSSSNSASQDTKESSEEPPSEESQDTPIYTEFDEDFEEEPTSP) is interaction with DNM2 and WASL. Residues 497-506 (PPDSSSNSAS) are compositionally biased toward low complexity. Residues 529-538 (EFDEDFEEEP) show a composition bias toward acidic residues. The interval 529–601 (EFDEDFEEEP…PTSYLRVTLN (73 aa)) is interaction with DNM1 and WASL. Residues 538 to 601 (PTSPIGHCVA…PTSYLRVTLN (64 aa)) are required for podosome formation. Residues 540-601 (SPIGHCVAIY…PTSYLRVTLN (62 aa)) form the SH3 domain. The interaction with WAS stretch occupies residues 544-601 (HCVAIYHFEGSSEGTISMAEGEDLSLMEEDKGDGWTRVRRKEGGEGYVPTSYLRVTLN). The interval 546–601 (VAIYHFEGSSEGTISMAEGEDLSLMEEDKGDGWTRVRRKEGGEGYVPTSYLRVTLN) is interaction with ARHGAP17, DAAM1, DIAPH1 and DIAPH2.

The protein belongs to the FNBP1 family. As to quaternary structure, homodimerizes, the dimers can polymerize end-to-end to form filamentous structures. Interacts with AKAP9, ARHGAP17, DAAM1, DIAPH1, DIAPH2, DNM1, FASLG/FASL, GAPVD1, LYN, microtubules, PDE6G, SRC and WAS/WASP. Interacts with the ligand binding domain of the thyroid receptor (TR) in the presence of thyroid hormone. May interact with CTNNB1 and HD/HTT. Interacts specifically with GTP-bound CDC42 and RHOQ. Interacts with DNM2 and WASL. Post-translationally, tyrosine phosphorylated. Also phosphorylated by PKA.

It is found in the cytoplasm. The protein resides in the cytoskeleton. Its subcellular location is the cell cortex. The protein localises to the lysosome. It localises to the golgi apparatus. It is found in the cell membrane. The protein resides in the cell projection. Its subcellular location is the phagocytic cup. Functionally, required to coordinate membrane tubulation with reorganization of the actin cytoskeleton during endocytosis. Also acts as a link between CDC42 signaling and regulation of the actin cytoskeleton. Binds to lipids such as phosphatidylinositol 4,5-bisphosphate and phosphatidylserine and promotes membrane invagination and the formation of tubules. Also enhances actin polymerization in the vicinity of membrane tubules by recruiting WASL/N-WASP which in turn activates the Arp2/3 complex. Actin polymerization and dynamin may promote the fission of membrane tubules to form endocytic vesicles. Required for the formation of podosomes, actin-rich adhesion structures specific to monocyte-derived cells. Required for translocation of GLUT4 to the plasma membrane in response to insulin signaling. May be required for the lysosomal retention of FASLG/FASL. The chain is Cdc42-interacting protein 4 (TRIP10) from Pongo abelii (Sumatran orangutan).